A 102-amino-acid chain; its full sequence is Large ribosomal subunit protein bL36m (102 aa).

Belongs to the bacterial ribosomal protein bL36 family. In terms of assembly, component of the mitochondrial ribosome large subunit (39S) which comprises a 16S rRNA and about 50 distinct proteins.

The protein localises to the mitochondrion. The protein is Large ribosomal subunit protein bL36m (Mrpl36) of Mus musculus (Mouse).